Consider the following 399-residue polypeptide: tRNA-specific 2-thiouridylase MnmA (399 aa).

Residues 18-25 and Leu-44 each bind ATP; that span reads AMSGGVDS. Cys-112 acts as the Nucleophile in catalysis. A disulfide bond links Cys-112 and Cys-213. Gly-136 contributes to the ATP binding site. The segment at 163 to 165 is interaction with tRNA; sequence RDQ. Residue Cys-213 is the Cysteine persulfide intermediate of the active site.

It belongs to the MnmA/TRMU family.

Its subcellular location is the cytoplasm. It catalyses the reaction S-sulfanyl-L-cysteinyl-[protein] + uridine(34) in tRNA + AH2 + ATP = 2-thiouridine(34) in tRNA + L-cysteinyl-[protein] + A + AMP + diphosphate + H(+). Its function is as follows. Catalyzes the 2-thiolation of uridine at the wobble position (U34) of tRNA, leading to the formation of s(2)U34. This chain is tRNA-specific 2-thiouridylase MnmA, found in Rhizobium leguminosarum bv. trifolii (strain WSM2304).